The sequence spans 596 residues: ATP-dependent RNA helicase dbp3 (596 aa).

Residues 1 to 17 (MPKRTLEDTELNPRDNY) are compositionally biased toward basic and acidic residues. 2 disordered regions span residues 1 to 87 (MPKR…ESTS) and 115 to 139 (EEKVDIPESTDSATPISVAPQQNGT). Over residues 21–30 (SSKKSRKEKR) the composition is skewed to basic residues. The stretch at 47-120 (IDIEVESKEA…KEGKEEKVDI (74 aa)) forms a coiled coil. Positions 123–139 (STDSATPISVAPQQNGT) are enriched in polar residues. The Q motif motif lies at 180–207 (IKFDYLPITDSAQRAPFKDFKAPTPIQA). The region spanning 210 to 386 (WPFLLAGRDV…STFMTSPVKI (177 aa)) is the Helicase ATP-binding domain. 223–230 (AETGSGKT) contributes to the ATP binding site. The DEAD box motif lies at 332–335 (DEAD). One can recognise a Helicase C-terminal domain in the interval 417 to 566 (RLMQLLKQYQ…PVPDELLKFG (150 aa)).

The protein belongs to the DEAD box helicase family. DDX5/DBP2 subfamily.

Its subcellular location is the nucleus. It localises to the nucleolus. The enzyme catalyses ATP + H2O = ADP + phosphate + H(+). Functionally, ATP-dependent RNA helicase required for 60S ribosomal subunit synthesis. Involved in efficient pre-rRNA processing, predominantly at site A3, which is necessary for the normal formation of 25S and 5.8S rRNAs. The sequence is that of ATP-dependent RNA helicase dbp3 (dbp3) from Sclerotinia sclerotiorum (strain ATCC 18683 / 1980 / Ss-1) (White mold).